The sequence spans 523 residues: Metalloprotease TIKI2 (523 aa).

The N-terminal stretch at 1–26 (MGKTMWARAVFLCFSVGTLLWQEVLT) is a signal peptide. Topologically, residues 27–499 (RRIPVDTGQC…HSQSNSSPKC (473 aa)) are extracellular. Asn-225, Asn-234, Asn-283, and Asn-341 each carry an N-linked (GlcNAc...) asparagine glycan. The helical transmembrane segment at 500 to 516 (LSASPAFLYTLVTLCLI) threads the bilayer. Residues 517-523 (TTMRTRS) are Cytoplasmic-facing.

Belongs to the TIKI family. Requires Mn(2+) as cofactor. It depends on Co(2+) as a cofactor.

It localises to the cell membrane. Functionally, metalloprotease that acts as a negative regulator of the Wnt signaling pathway by mediating the cleavage of the N-terminal residues of a subset of Wnt proteins. Following cleavage, Wnt proteins become oxidized and form large disulfide-bond oligomers, leading to their inactivation. Able to cleave wnt8. Required for head formation. The chain is Metalloprotease TIKI2 (trabd2b) from Xenopus tropicalis (Western clawed frog).